Consider the following 134-residue polypeptide: ATP synthase epsilon chain (134 aa).

It belongs to the ATPase epsilon chain family. F-type ATPases have 2 components, CF(1) - the catalytic core - and CF(0) - the membrane proton channel. CF(1) has five subunits: alpha(3), beta(3), gamma(1), delta(1), epsilon(1). CF(0) has three main subunits: a, b and c.

Its subcellular location is the cell membrane. Functionally, produces ATP from ADP in the presence of a proton gradient across the membrane. This is ATP synthase epsilon chain (atpC) from Priestia megaterium (strain ATCC 12872 / QMB1551) (Bacillus megaterium).